Here is a 147-residue protein sequence, read N- to C-terminus: 3-dehydroquinate dehydratase (147 aa).

The active-site Proton acceptor is Tyr-24. Substrate contacts are provided by Asn-75, His-81, and Asp-88. The active-site Proton donor is His-101. Substrate contacts are provided by residues 102–103 (IS) and Arg-112.

This sequence belongs to the type-II 3-dehydroquinase family. Homododecamer.

The enzyme catalyses 3-dehydroquinate = 3-dehydroshikimate + H2O. The protein operates within metabolic intermediate biosynthesis; chorismate biosynthesis; chorismate from D-erythrose 4-phosphate and phosphoenolpyruvate: step 3/7. In terms of biological role, catalyzes a trans-dehydration via an enolate intermediate. The polypeptide is 3-dehydroquinate dehydratase (Cereibacter sphaeroides (strain ATCC 17029 / ATH 2.4.9) (Rhodobacter sphaeroides)).